A 244-amino-acid chain; its full sequence is 5-oxoprolinase subunit A (244 aa).

Belongs to the LamB/PxpA family. As to quaternary structure, forms a complex composed of PxpA, PxpB and PxpC.

It carries out the reaction 5-oxo-L-proline + ATP + 2 H2O = L-glutamate + ADP + phosphate + H(+). Catalyzes the cleavage of 5-oxoproline to form L-glutamate coupled to the hydrolysis of ATP to ADP and inorganic phosphate. The protein is 5-oxoprolinase subunit A of Escherichia coli (strain SE11).